The sequence spans 280 residues: UPF0276 protein NMB2142 (280 aa).

The protein belongs to the UPF0276 family.

The polypeptide is UPF0276 protein NMB2142 (Neisseria meningitidis serogroup B (strain ATCC BAA-335 / MC58)).